Here is a 464-residue protein sequence, read N- to C-terminus: Agamous-like MADS-box protein AGL92 (464 aa).

The 60-residue stretch at M1–E60 folds into the MADS-box domain. The stretch at E85–F114 forms a coiled coil. A disordered region spans residues T443–V464. Residues T451 to V464 show a composition bias toward low complexity.

In terms of assembly, interacts with AGL62.

The protein localises to the nucleus. Its function is as follows. Putative transcription factor. The chain is Agamous-like MADS-box protein AGL92 (AGL92) from Arabidopsis thaliana (Mouse-ear cress).